The sequence spans 705 residues: Bifunctional arginine dihydrolase/ornithine cyclodeaminase ArgZ (705 aa).

An arginine dihydrolase region spans residues 10-269; it reads CPPDHYDVDY…GAAKCLTLRV (260 aa). Positions 22, 71, 90, 139, 168, 170, 258, and 264 each coordinate L-arginine. L-ornithine-binding residues include N22, N71, R90, R139, and H168. Residue H168 is the Proton donor/acceptor of the active site. L-ornithine is bound by residues A258 and C264. Residue C264 is the Nucleophile of the active site. The segment at 285–695 is ornithine cyclodeaminase; the sequence is SRVIRMEGHL…SLLVRQLQQL (411 aa). Residues N525, A526, D604, S636, M637, L638, H639, D657, D680, and V681 each coordinate NAD(+).

In the N-terminal section; belongs to the DDAH family. It in the C-terminal section; belongs to the AgrE/ArgZ ornithine cyclodeaminase family. In terms of assembly, homotetramer. It depends on NAD(+) as a cofactor.

The catalysed reaction is L-arginine + 2 H2O + 2 H(+) = L-ornithine + 2 NH4(+) + CO2. It catalyses the reaction L-ornithine = L-proline + NH4(+). Arginine dihydrolase activity does not require a metal cofactor. Bifunctional enzyme involved in a cyanobacterial arginine utilization pathway that enables cellular adaptation to nitrogen fluctuations. Catalyzes the hydrolysis of arginine to ornithine, with the release of ammonia and carbon dioxide. Then, probably catalyzes the conversion of ornithine to proline, with the release of ammonia. Is highly specific for arginine and cannot hydrolyze citrulline, dimethylarginine and other amino acids. In Synechocystis sp. (strain ATCC 27184 / PCC 6803 / Kazusa), this protein is Bifunctional arginine dihydrolase/ornithine cyclodeaminase ArgZ.